The sequence spans 522 residues: ATP synthase subunit alpha (522 aa).

An ATP-binding site is contributed by 176–183 (GDRQTGKT).

This sequence belongs to the ATPase alpha/beta chains family. In terms of assembly, F-type ATPases have 2 components, CF(1) - the catalytic core - and CF(0) - the membrane proton channel. CF(1) has five subunits: alpha(3), beta(3), gamma(1), delta(1), epsilon(1). CF(0) has four main subunits: a, b, b' and c.

It is found in the cell membrane. It carries out the reaction ATP + H2O + 4 H(+)(in) = ADP + phosphate + 5 H(+)(out). Produces ATP from ADP in the presence of a proton gradient across the membrane. The alpha chain is a regulatory subunit. This chain is ATP synthase subunit alpha, found in Chloroflexus aggregans (strain MD-66 / DSM 9485).